The following is a 1112-amino-acid chain: Mediator of RNA polymerase II transcription subunit 14 (1112 aa).

Disordered regions lie at residues 1–76 (MPGV…INES), 120–141 (SPHG…QSPE), and 1088–1112 (TNSA…ITID). Residues 20–39 (SPDNVSSTPFPQERVNQSGD) are compositionally biased toward polar residues. The span at 64-73 (IETHTGKDGI) shows a compositional bias: basic and acidic residues. A compositionally biased stretch (polar residues) spans 1088 to 1099 (TNSAGARSSQQC).

Belongs to the Mediator complex subunit 14 family. Component of the Mediator complex.

It is found in the nucleus. Its function is as follows. Component of the Mediator complex, a coactivator involved in the regulated transcription of nearly all RNA polymerase II-dependent genes. Mediator functions as a bridge to convey information from gene-specific regulatory proteins to the basal RNA polymerase II transcription machinery. Mediator is recruited to promoters by direct interactions with regulatory proteins and serves as a scaffold for the assembly of a functional preinitiation complex with RNA polymerase II and the general transcription factors. The sequence is that of Mediator of RNA polymerase II transcription subunit 14 (rgr1) from Aspergillus clavatus (strain ATCC 1007 / CBS 513.65 / DSM 816 / NCTC 3887 / NRRL 1 / QM 1276 / 107).